Here is an 88-residue protein sequence, read N- to C-terminus: uncharacterized protein (88 aa).

This is an uncharacterized protein from Archaeoglobus fulgidus (strain ATCC 49558 / DSM 4304 / JCM 9628 / NBRC 100126 / VC-16).